Consider the following 245-residue polypeptide: Eukaryotic translation initiation factor 3 subunit K (245 aa).

A PCI domain is found at tyrosine 46–asparagine 227.

Belongs to the eIF-3 subunit K family. Component of the eukaryotic translation initiation factor 3 (eIF-3) complex.

Its subcellular location is the cytoplasm. Component of the eukaryotic translation initiation factor 3 (eIF-3) complex, which is involved in protein synthesis of a specialized repertoire of mRNAs and, together with other initiation factors, stimulates binding of mRNA and methionyl-tRNAi to the 40S ribosome. The eIF-3 complex specifically targets and initiates translation of a subset of mRNAs involved in cell proliferation. In Botryotinia fuckeliana (strain B05.10) (Noble rot fungus), this protein is Eukaryotic translation initiation factor 3 subunit K.